A 1082-amino-acid polypeptide reads, in one-letter code: MAEAVDEDSGVGRSLEESSNGQHSQAGEALSEWRSSGQVENGTPSTSPSYWDIDDDDDYGLKPSELYGQYTWKIPKFSEITKREHRSNVFEAGGYKWYILIYPQGCDVCNHLSLFLCVANYDKLLPGSFAILEAGWSQFAQFTISVLSQDLKKSKFSDTLHRFWKKEHDWGWKKFMELPKLKDGFIDESGCLTIEAKVQVIRERVDRPFRCLDCGYRRELVRVYFQNVEQICRRFVEEKRSKLGRLIEDKARWTSFGVFWLGMDQNSRRRMCREKVDVILKGVVKHFFVEKEVSSTLVMDSLYSGLKALEGQTKNMKARSRLLDAKQLPAPIVSVDKDMFVLVDDVLLLLERAALEPLPPKDEKGRQNRTKDGNDGEEVNKEADERDERRLTELGRRTVEIFILSHIFSTKIEVAHQEAIALKRQEELIREEEEAWLAETEQRAKRGAAEREKKSKKKQAKQKRNKNKGKDKRKEEKVSFATHAKDLEENQNQNQNDEEEKDSVTEKAQSSAEKPDTLGDVSDISDSVDGSADILQPDLEDRDSSSVLWDTDALEIHPPSSEGSSRGRGISISTPNGITEGKSHSTMDDSSSTCSNDSIRSGVTNGSYQGNSLNFRNQKSPNKGKNQQVKAMTDAHSLASETDDQPSTLGTDPKGQNYSSEASNVGESDWVVVSHIQEPEGSRNRIPVGRERKTVQSIVNSVDMDRPKEKSTAVLSSPRNVAKNPSPLTQTKPEKKSISTADGIPNRKVLATGPPSSSQVVLPSDIQSQTVGLRADMQKLSAPKQPPATTISRPSSAPIIPAMRPSPITVSSSVQTTTSLPRSVSSAGRLGPDPSLHNQQTYTPQSYKNAIVGNSLGSSSSSFNHHPSSHGVVPTTLPSSSYSQAPTSSYQSSFPYSQDGLLWTGRSPSSVNMGMYNNTYSPAVTSNRSLNHMDVQIAQQQAQSMMTDEFPHLDIINDLLEDEQCSNMVYNGSIFNPQPQVFNGQYSSYHGELLSGGRTRSFGEEGLHYMARGPYGTDGMMPRQWQMTNMDLSLPAMRSNGMEDGTSSAANYHHSYFGLDASNPSFTSGINGYTEFRPSNGH.

Residues 1–54 (MAEAVDEDSGVGRSLEESSNGQHSQAGEALSEWRSSGQVENGTPSTSPSYWDID) form a disordered region. N-acetylalanine is present on alanine 2. The segment covering 33–49 (WRSSGQVENGTPSTSPS) has biased composition (polar residues). One can recognise an MATH domain in the interval 67-198 (YGQYTWKIPK…SGCLTIEAKV (132 aa)). Disordered regions lie at residues 358–388 (LPPKDEKGRQNRTKDGNDGEEVNKEADERDE), 440–666 (TEQR…SNVG), 697–762 (SIVN…QVVL), 780–800 (LSAPKQPPATTISRPSSAPII), 812–841 (SSVQTTTSLPRSVSSAGRLGPDPSLHNQQT), and 858–889 (SSSSSFNHHPSSHGVVPTTLPSSSYSQAPTSS). Composition is skewed to basic and acidic residues over residues 359–388 (PPKDEKGRQNRTKDGNDGEEVNKEADERDE) and 440–453 (TEQRAKRGAAEREK). Residues 446-507 (RGAAEREKKS…EEEKDSVTEK (62 aa)) are a coiled coil. Positions 454 to 471 (KSKKKQAKQKRNKNKGKD) are enriched in basic residues. The segment covering 472-488 (KRKEEKVSFATHAKDLE) has biased composition (basic and acidic residues). Low complexity-rich tracts occupy residues 519-534 (GDVSDISDSVDGSADI) and 560-573 (SSEGSSRGRGISIS). 2 stretches are compositionally biased toward polar residues: residues 588-630 (DDSS…QQVK) and 645-666 (QPSTLGTDPKGQNYSSEASNVG). 2 stretches are compositionally biased toward low complexity: residues 858-871 (SSSSSFNHHPSSHG) and 878-889 (PSSSYSQAPTSS).

As to quaternary structure, forms homooligomers. Interacts with SNC1, RPS2 and CPR1/CPR30. Interacts with ATG6.

The protein localises to the cytoplasm. It localises to the cell membrane. Functionally, functions redundantly with TRAF1A in the regulation of plant immune response. Contributes to the turnover of the nucleotide-binding domain and leucine-rich repeat-containing (NB-LRR) immune receptors SNC1 and RPS2. May associate with an E3 ubiquitin-protein ligase complex, which modulates ubiquitination and subsequent degradation of NB-LRR immune sensors to maintain their homeostasis. Functions redundantly with TRAF1A in the regulation of autophagosome formation. Required for SINAT1- and SINAT2-mediated ubiquitination and destabilization of ATG6. Functions as a molecular adapter that helps to regulate autophagy by modulating ATG6 stability. This Arabidopsis thaliana (Mouse-ear cress) protein is TNF receptor-associated factor homolog 1b.